Reading from the N-terminus, the 885-residue chain is Protein PTHB1 (885 aa).

The interval 1–406 (MSLFKARDWW…LQGVWPLTEQ (406 aa)) is seven-bladed beta-propeller. Residues 684–764 (RDKTPAPLQH…FLPLQEDTQE (81 aa)) form an interaction with LZTL1 region.

Part of BBSome complex, that contains BBS1, BBS2, BBS4, BBS5, BBS7, BBS8/TTC8, BBS9 and BBIP10. Interacts with LZTL1; the interaction mediates the association of LZTL1 with the BBsome complex and regulates BBSome ciliary trafficking.

It is found in the cell projection. It localises to the cilium membrane. The protein resides in the cytoplasm. The protein localises to the cytoskeleton. Its subcellular location is the microtubule organizing center. It is found in the centrosome. It localises to the centriolar satellite. Its function is as follows. The BBSome complex is thought to function as a coat complex required for sorting of specific membrane proteins to the primary cilia. The BBSome complex is required for ciliogenesis but is dispensable for centriolar satellite function. This ciliogenic function is mediated in part by the Rab8 GDP/GTP exchange factor, which localizes to the basal body and contacts the BBSome. Rab8(GTP) enters the primary cilium and promotes extension of the ciliary membrane. Firstly the BBSome associates with the ciliary membrane and binds to RAB3IP/Rabin8, the guanosyl exchange factor (GEF) for Rab8 and then the Rab8-GTP localizes to the cilium and promotes docking and fusion of carrier vesicles to the base of the ciliary membrane. Required for proper BBSome complex assembly and its ciliary localization. This chain is Protein PTHB1 (Bbs9), found in Mus musculus (Mouse).